A 215-amino-acid chain; its full sequence is Interleukin-12 subunit alpha (215 aa).

Positions 1–22 (MCSSRCLLFLATLAFLIHLSLA) are cleaved as a signal peptide. Intrachain disulfides connect Cys33–Cys106, Cys60–Cys192, and Cys81–Cys119. The N-linked (GlcNAc...) asparagine glycan is linked to Asn89.

It belongs to the IL-6 superfamily. In terms of assembly, heterodimer with IL12B; disulfide-linked. This heterodimer is known as interleukin IL-12. Heterodimer with EBI3/IL27B; not disulfide-linked. This heterodimer is known as interleukin IL-35. Interacts with NBR1; this interaction promotes IL-12 secretion.

It is found in the secreted. In terms of biological role, heterodimerizes with IL12B to form the IL-12 cytokine or with EBI3/IL27B to form the IL-35 cytokine. IL-12 is primarily produced by professional antigen-presenting cells (APCs) such as B-cells and dendritic cells (DCs) as well as macrophages and granulocytes and regulates T-cell and natural killer-cell responses, induces the production of interferon-gamma (IFN-gamma), favors the differentiation of T-helper 1 (Th1) cells and is an important link between innate resistance and adaptive immunity. Mechanistically, exerts its biological effects through a receptor composed of IL12R1 and IL12R2 subunits. Binding to the receptor results in the rapid tyrosine phosphorylation of a number of cellular substrates including the JAK family kinases TYK2 and JAK2. In turn, recruited STAT4 gets phosphorylated and translocates to the nucleus where it regulates cytokine/growth factor responsive genes. As part of IL-35, plays essential roles in maintaining the immune homeostasis of the liver microenvironment and also functions as an immune-suppressive cytokine. Mediates biological events through unconventional receptors composed of IL12RB2 and gp130/IL6ST heterodimers or homodimers. Signaling requires the transcription factors STAT1 and STAT4, which form a unique heterodimer that binds to distinct DNA sites. The polypeptide is Interleukin-12 subunit alpha (IL12A) (Sigmodon hispidus (Hispid cotton rat)).